Here is a 930-residue protein sequence, read N- to C-terminus: Isoleucine--tRNA ligase (930 aa).

The short motif at 57–67 is the 'HIGH' region element; that stretch reads PYANGHLHLGH. L-isoleucyl-5'-AMP is bound at residue Glu555. The short motif at 596-600 is the 'KMSKS' region element; it reads KMSKS. Position 599 (Lys599) interacts with ATP. Residues Cys896, Cys899, Cys916, and Cys919 each coordinate Zn(2+).

Belongs to the class-I aminoacyl-tRNA synthetase family. IleS type 1 subfamily. In terms of assembly, monomer. Zn(2+) is required as a cofactor.

It is found in the cytoplasm. It carries out the reaction tRNA(Ile) + L-isoleucine + ATP = L-isoleucyl-tRNA(Ile) + AMP + diphosphate. Its function is as follows. Catalyzes the attachment of isoleucine to tRNA(Ile). As IleRS can inadvertently accommodate and process structurally similar amino acids such as valine, to avoid such errors it has two additional distinct tRNA(Ile)-dependent editing activities. One activity is designated as 'pretransfer' editing and involves the hydrolysis of activated Val-AMP. The other activity is designated 'posttransfer' editing and involves deacylation of mischarged Val-tRNA(Ile). This Moorella thermoacetica (strain ATCC 39073 / JCM 9320) protein is Isoleucine--tRNA ligase.